The sequence spans 147 residues: MQNNEIQPSFLIQKVYTKDVSFETINSPACFKEQWNPSSDFNIDINTTKINNENFELDLTITVTTKNNETNVYIAEVTQSGIFTITGMSEEQIDSVLNTYCANTLFPYAKRIIDSSIIKGGFLPLNLAPINFDAIYLQKKSSPKREH.

This sequence belongs to the SecB family. In terms of assembly, homotetramer, a dimer of dimers. One homotetramer interacts with 1 SecA dimer.

The protein localises to the cytoplasm. Functionally, one of the proteins required for the normal export of preproteins out of the cell cytoplasm. It is a molecular chaperone that binds to a subset of precursor proteins, maintaining them in a translocation-competent state. It also specifically binds to its receptor SecA. The chain is Protein-export protein SecB 2 from Francisella tularensis subsp. novicida (strain U112).